Consider the following 257-residue polypeptide: Large ribosomal subunit protein uL2 (257 aa).

A disordered region spans residues 207 to 230 (VEHPFGGGNHQHIGKPSTIRRDAP).

It belongs to the universal ribosomal protein uL2 family. As to quaternary structure, component of the large ribosomal subunit.

The protein localises to the cytoplasm. Its function is as follows. Component of the large ribosomal subunit. The ribosome is a large ribonucleoprotein complex responsible for the synthesis of proteins in the cell. This Danio rerio (Zebrafish) protein is Large ribosomal subunit protein uL2 (rpl8).